A 655-amino-acid chain; its full sequence is p-hydroxybenzoic acid efflux pump subunit AaeB (655 aa).

11 consecutive transmembrane segments (helical) span residues 13–33 (FAVK…HFQL), 38–58 (WAVL…GGEP), 69–89 (LRII…ISMI), 93–113 (LLMI…SSLV), 121–141 (WGLS…EPLL), 152–172 (EIVI…PRSI), 370–390 (LFWL…IAVV), 407–427 (FIYG…VIIP), 431–451 (QSML…GIEV), 459–479 (MGAL…TFHF), and 482–502 (FLDS…VILL).

This sequence belongs to the aromatic acid exporter ArAE (TC 2.A.85) family.

It is found in the cell inner membrane. Forms an efflux pump with AaeA. Could function as a metabolic relief valve, allowing to eliminate certain compounds when they accumulate to high levels in the cell. This Salmonella enteritidis PT4 (strain P125109) protein is p-hydroxybenzoic acid efflux pump subunit AaeB.